Consider the following 200-residue polypeptide: Probable GTP-binding protein EngB (200 aa).

An EngB-type G domain is found at 24-199 (EGAEVAFAGR…RGVIGGWLGL (176 aa)). GTP is bound by residues 32 to 39 (GRSNAGKS), 59 to 63 (GRTQQ), 77 to 80 (DLPG), 144 to 147 (TKAD), and 178 to 180 (FSG). Positions 39 and 61 each coordinate Mg(2+).

This sequence belongs to the TRAFAC class TrmE-Era-EngA-EngB-Septin-like GTPase superfamily. EngB GTPase family. It depends on Mg(2+) as a cofactor.

In terms of biological role, necessary for normal cell division and for the maintenance of normal septation. The sequence is that of Probable GTP-binding protein EngB from Stenotrophomonas maltophilia (strain K279a).